A 636-amino-acid polypeptide reads, in one-letter code: Epithelial sodium channel subunit alpha (636 aa).

The disordered stretch occupies residues 1–28 (MKSENQPEDKRIGKLKREANMQKMKEAA). Topologically, residues 1–77 (MKSENQPEDK…VCSKKNRMKT (77 aa)) are cytoplasmic. The helical transmembrane segment at 78–98 (AFWSILFFFTFGLMYWQFGII) threads the bilayer. Over 99 to 549 (YREYFSFPVN…SQWSLWFGSS (451 aa)) the chain is Extracellular. 10 disulfides stabilise this stretch: Cys126/Cys293, Cys218/Cys225, Cys270/Cys277, Cys381/Cys466, Cys403/Cys443, Cys403/Cys462, Cys407/Cys458, Cys416/Cys443, Cys416/Cys466, and Cys418/Cys432. The helical transmembrane segment at 550–570 (VLSVVELVELILDFIAITCIL) threads the bilayer. The Cytoplasmic segment spans residues 571-636 (AIHWLNMNRS…LRRVSSQQTE (66 aa)).

The protein belongs to the amiloride-sensitive sodium channel (TC 1.A.6) family. SCNN1A subfamily. As to quaternary structure, heterotrimer; containing an alpha/SCNN1A, a beta/SCNN1B and a gamma/SCNN1G subunit.

It localises to the apical cell membrane. It is found in the cell projection. The protein localises to the cilium. The protein resides in the cytoplasmic granule. Its subcellular location is the cytoplasm. It localises to the cytoplasmic vesicle. It is found in the secretory vesicle. The protein localises to the acrosome. The protein resides in the flagellum. It carries out the reaction Na(+)(in) = Na(+)(out). With respect to regulation, originally identified and characterized by its inhibition by the diuretic drug amiloride. Functionally, this is one of the three pore-forming subunits of the heterotrimeric epithelial sodium channel (ENaC), a critical regulator of sodium balance and fluid homeostasis. ENaC operates in epithelial tissues, where it mediates the electrodiffusion of sodium ions from extracellular fluid through the apical membrane of cells, with water following osmotically. This chain is Epithelial sodium channel subunit alpha, found in Anolis carolinensis (Green anole).